The following is a 122-amino-acid chain: Large ribosomal subunit protein uL14 (122 aa).

It belongs to the universal ribosomal protein uL14 family. Part of the 50S ribosomal subunit. Forms a cluster with proteins L3 and L19. In the 70S ribosome, L14 and L19 interact and together make contacts with the 16S rRNA in bridges B5 and B8.

Binds to 23S rRNA. Forms part of two intersubunit bridges in the 70S ribosome. This is Large ribosomal subunit protein uL14 from Beijerinckia indica subsp. indica (strain ATCC 9039 / DSM 1715 / NCIMB 8712).